The following is a 541-amino-acid chain: Membrane protein insertase YidC (541 aa).

Transmembrane regions (helical) follow at residues 7 to 27 (LLFM…QVDY), 345 to 365 (LVQN…AILY), 415 to 435 (LGGC…YWTF), 453 to 473 (LSAQ…MFLL), and 492 to 512 (FMPL…VLYW).

Belongs to the OXA1/ALB3/YidC family. Type 1 subfamily. In terms of assembly, interacts with the Sec translocase complex via SecD. Specifically interacts with transmembrane segments of nascent integral membrane proteins during membrane integration.

It localises to the cell inner membrane. Functionally, required for the insertion and/or proper folding and/or complex formation of integral membrane proteins into the membrane. Involved in integration of membrane proteins that insert both dependently and independently of the Sec translocase complex, as well as at least some lipoproteins. Aids folding of multispanning membrane proteins. The protein is Membrane protein insertase YidC of Histophilus somni (strain 129Pt) (Haemophilus somnus).